The chain runs to 396 residues: 1-deoxy-D-xylulose 5-phosphate reductoisomerase (396 aa).

NADPH contacts are provided by Thr-15, Gly-16, Ser-17, Ile-18, Gly-41, and Asn-130. A 1-deoxy-D-xylulose 5-phosphate-binding site is contributed by Lys-131. An NADPH-binding site is contributed by Glu-132. Asp-155 provides a ligand contact to Mn(2+). 4 residues coordinate 1-deoxy-D-xylulose 5-phosphate: Ser-156, Glu-157, Ser-181, and His-204. Residue Glu-157 participates in Mn(2+) binding. Gly-210 is an NADPH binding site. 1-deoxy-D-xylulose 5-phosphate-binding residues include Ser-217, Asn-222, Lys-223, and Glu-226. A Mn(2+)-binding site is contributed by Glu-226.

The protein belongs to the DXR family. Mg(2+) serves as cofactor. Mn(2+) is required as a cofactor.

The catalysed reaction is 2-C-methyl-D-erythritol 4-phosphate + NADP(+) = 1-deoxy-D-xylulose 5-phosphate + NADPH + H(+). It participates in isoprenoid biosynthesis; isopentenyl diphosphate biosynthesis via DXP pathway; isopentenyl diphosphate from 1-deoxy-D-xylulose 5-phosphate: step 1/6. Its function is as follows. Catalyzes the NADPH-dependent rearrangement and reduction of 1-deoxy-D-xylulose-5-phosphate (DXP) to 2-C-methyl-D-erythritol 4-phosphate (MEP). The chain is 1-deoxy-D-xylulose 5-phosphate reductoisomerase from Bifidobacterium longum (strain NCC 2705).